The sequence spans 86 residues: RNA-binding protein Hfq (86 aa).

The Sm domain maps to 9-68; the sequence is DPYLNTLRKEKVGVSIYLVNGIKLQGTIESFDQFVILLKNTVSQMVYKHAISTVVPVRPI.

Belongs to the Hfq family. Homohexamer.

Functionally, RNA chaperone that binds small regulatory RNA (sRNAs) and mRNAs to facilitate mRNA translational regulation in response to envelope stress, environmental stress and changes in metabolite concentrations. Also binds with high specificity to tRNAs. This is RNA-binding protein Hfq from Pseudomonas fluorescens (strain ATCC BAA-477 / NRRL B-23932 / Pf-5).